An 85-amino-acid polypeptide reads, in one-letter code: Actobindin homolog (85 aa).

One can recognise a WH2 domain in the interval 35–52 (DRNELLSGIKEGKELKKA).

Is able to bind two actin monomers at high concentrations of G-actin. This Entamoeba histolytica protein is Actobindin homolog.